Here is a 999-residue protein sequence, read N- to C-terminus: Probable metabotropic glutamate receptor mgl-1 (999 aa).

L-glutamate-binding positions include Ser-202, 223–225 (AST), Tyr-273, Glu-363, and Lys-455. N-linked (GlcNAc...) asparagine glycosylation occurs at Asn-518. 7 helical membrane-spanning segments follow: residues 682-704 (SLVP…VVYV), 719-739 (LSYI…VLLS), 751-769 (TGIG…VKTN), 792-812 (VVMT…WLSV), 836-857 (HHFL…TYAV), 871-893 (FIGF…FFGT), and 904-929 (LCIS…IILF). The segment at 975-999 (DSTRRRSSRKTSQPTSTSSAHDTFL) is disordered. Residues 984 to 993 (KTSQPTSTSS) are compositionally biased toward low complexity.

The protein belongs to the G-protein coupled receptor 3 family.

The protein localises to the cell membrane. G-protein coupled receptor for glutamate. Ligand binding causes a conformation change that triggers signaling via guanine nucleotide-binding proteins (G proteins) and modulates the activity of down-stream effectors. The sequence is that of Probable metabotropic glutamate receptor mgl-1 (mgl-1) from Caenorhabditis elegans.